The sequence spans 122 residues: Serum amyloid A-1 protein (122 aa).

The signal sequence occupies residues 1–18; that stretch reads MKPFVAIIFCFLILGVDS. Residues 19–45 are important for amyloid formation; the sequence is QRWFQFMKEAGQGTRDMWRAYTDMREA. Residues 100–122 form a disordered region; that stretch reads ANEWGRSGKDPNFFRPPGLPSKY.

The protein belongs to the SAA family. As to quaternary structure, homohexamer; dimer of trimers. Can form amyloid fibrils after partial proteolysis; the native, undenatured protein does not form amyloid fibrils (in vitro). Apolipoprotein of the HDL complex. Binds to heparin. In terms of tissue distribution, detected in liver, spleen and kidney.

Its subcellular location is the secreted. Functionally, major acute phase protein. This Mesocricetus auratus (Golden hamster) protein is Serum amyloid A-1 protein (SAA1).